Consider the following 461-residue polypeptide: Secreted 45 kDa protein (461 aa).

The first 27 residues, 1–27, serve as a signal peptide directing secretion; the sequence is MKKKIISAILMSTVILSAAAPLSGVYA. Residues 264 to 329 are compositionally biased toward low complexity; it reads SSASASSSQA…GNTNSGTSTG (66 aa). The tract at residues 264–343 is disordered; that stretch reads SSASASSSQA…TTTGGSGINS (80 aa). Residues 330 to 340 show a composition bias toward gly residues; it reads NTGGTTTGGSG. In terms of domain architecture, Peptidase C51 spans 330–459; sequence NTGGTTTGGS…VSASGVTFLM (130 aa).

This chain is Secreted 45 kDa protein (usp45), found in Lactococcus lactis subsp. cremoris (strain MG1363).